Reading from the N-terminus, the 474-residue chain is Aspartate ammonia-lyase (474 aa).

Residues Thr-105, Ser-144, Thr-145, Asn-146, and Thr-191 each contribute to the L-aspartate site. Positions 322–331 (GSSIMPGKVN) are SS loop. Ser-323 serves as the catalytic Proton acceptor. 2 residues coordinate L-aspartate: Ser-324 and Lys-329.

Belongs to the class-II fumarase/aspartase family. Aspartase subfamily. In terms of assembly, homotetramer.

The catalysed reaction is L-aspartate = fumarate + NH4(+). Its function is as follows. Lyase involved in the degradation of canavanine, the delta-oxa-analog of arginine, allowing growth on canavanine as sole nitrogen and carbon source. Probably catalyzes the conversion of L-aspartate to fumarate and ammonia. This is Aspartate ammonia-lyase from Pseudomonas canavaninivorans.